A 519-amino-acid polypeptide reads, in one-letter code: 2,3-bisphosphoglycerate-independent phosphoglycerate mutase (519 aa).

Residues Asp-18 and Ser-68 each coordinate Mn(2+). Residue Ser-68 is the Phosphoserine intermediate of the active site. Substrate contacts are provided by residues His-129, 159 to 160 (RD), Arg-191, Arg-197, 267 to 270 (RADR), and Lys-341. Positions 408, 412, 449, 450, and 468 each coordinate Mn(2+).

It belongs to the BPG-independent phosphoglycerate mutase family. In terms of assembly, monomer. Mn(2+) is required as a cofactor.

The catalysed reaction is (2R)-2-phosphoglycerate = (2R)-3-phosphoglycerate. It participates in carbohydrate degradation; glycolysis; pyruvate from D-glyceraldehyde 3-phosphate: step 3/5. Catalyzes the interconversion of 2-phosphoglycerate and 3-phosphoglycerate. This chain is 2,3-bisphosphoglycerate-independent phosphoglycerate mutase, found in Coxiella burnetii (strain RSA 493 / Nine Mile phase I).